The sequence spans 167 residues: Phosphopantetheine adenylyltransferase (167 aa).

Substrate is bound at residue Thr-9. ATP-binding positions include 9 to 10 (TF) and His-17. Residues Lys-41, Leu-73, and Arg-87 each contribute to the substrate site. ATP is bound by residues 88–90 (GLR), Glu-98, and 123–129 (YQFISGT).

It belongs to the bacterial CoaD family. Homohexamer. The cofactor is Mg(2+).

Its subcellular location is the cytoplasm. The catalysed reaction is (R)-4'-phosphopantetheine + ATP + H(+) = 3'-dephospho-CoA + diphosphate. It functions in the pathway cofactor biosynthesis; coenzyme A biosynthesis; CoA from (R)-pantothenate: step 4/5. Functionally, reversibly transfers an adenylyl group from ATP to 4'-phosphopantetheine, yielding dephospho-CoA (dPCoA) and pyrophosphate. This is Phosphopantetheine adenylyltransferase from Ralstonia pickettii (strain 12J).